A 362-amino-acid polypeptide reads, in one-letter code: Cobalt-precorrin-5B C(1)-methyltransferase (362 aa).

This sequence belongs to the CbiD family.

It carries out the reaction Co-precorrin-5B + S-adenosyl-L-methionine = Co-precorrin-6A + S-adenosyl-L-homocysteine. Its pathway is cofactor biosynthesis; adenosylcobalamin biosynthesis; cob(II)yrinate a,c-diamide from sirohydrochlorin (anaerobic route): step 6/10. Its function is as follows. Catalyzes the methylation of C-1 in cobalt-precorrin-5B to form cobalt-precorrin-6A. This Methanocaldococcus jannaschii (strain ATCC 43067 / DSM 2661 / JAL-1 / JCM 10045 / NBRC 100440) (Methanococcus jannaschii) protein is Cobalt-precorrin-5B C(1)-methyltransferase.